A 228-amino-acid polypeptide reads, in one-letter code: U1 small nuclear ribonucleoprotein C (228 aa).

A Matrin-type zinc finger spans residues 4-36; that stretch reads YYCEYCDIYLTHSSPVGRRQHVQGRKHISAKIE. Residues 179–190 show a composition bias toward basic and acidic residues; sequence LVKDNPNEERNG. Residues 179–228 are disordered; it reads LVKDNPNEERNGDSAIANQPSTMHHEEDQDDPANATGGTANNNDNVSINA. Low complexity predominate over residues 211–221; the sequence is ANATGGTANNN.

It belongs to the U1 small nuclear ribonucleoprotein C family. In terms of assembly, U1 snRNP is composed of the 7 core Sm proteins B/B', D1, D2, D3, E, F and G that assemble in a heptameric protein ring on the Sm site of the small nuclear RNA to form the core snRNP, and at least 3 U1 snRNP-specific proteins U1-70K, U1-A and U1-C. U1-C interacts with U1 snRNA and the 5' splice-site region of the pre-mRNA.

It is found in the nucleus. Component of the spliceosomal U1 snRNP, which is essential for recognition of the pre-mRNA 5' splice-site and the subsequent assembly of the spliceosome. U1-C is directly involved in initial 5' splice-site recognition for both constitutive and regulated alternative splicing. The interaction with the 5' splice-site seems to precede base-pairing between the pre-mRNA and the U1 snRNA. Stimulates commitment or early (E) complex formation by stabilizing the base pairing of the 5' end of the U1 snRNA and the 5' splice-site region. This Plasmodium knowlesi (strain H) protein is U1 small nuclear ribonucleoprotein C.